Here is a 1578-residue protein sequence, read N- to C-terminus: Formin-2 (1578 aa).

Composition is skewed to basic and acidic residues over residues 1-17, 26-35, and 57-66; these read MGNQ…DASH, AGPRDAEITK, and TSKKKSKSDS. The disordered stretch occupies residues 1 to 73; the sequence is MGNQDGKLKR…SDSRASVFSN (73 aa). S89 is subject to Phosphoserine. Disordered regions lie at residues 208-230, 244-383, and 401-458; these read KLLL…QPGA, EAEK…PSPR, and RQLS…GLSR. Polar residues-rich tracts occupy residues 273–282 and 290–300; these read SSGSHLTSET and SAVTDSLSSPA. A compositionally biased stretch (acidic residues) spans 322–333; that stretch reads DTDEECEEDAFE. Over residues 351 to 364 the composition is skewed to basic and acidic residues; it reads ASQRLEKEPEEGMR. 2 stretches are compositionally biased toward low complexity: residues 404 to 418 and 427 to 442; these read SSPN…NQSP and SVSR…AAAP. Residues S459, S489, and S493 each carry the phosphoserine modification. Residues 587–634 form a disordered region; sequence SMDYSEGQFPRREPSMWPSSKLPEEEPSPKDVDTEPKSSILESPKKCS. Over residues 608–622 the composition is skewed to basic and acidic residues; the sequence is LPEEEPSPKDVDTEP. Residues 643–683 are a coiled coil; the sequence is DVKSEGQATVIQQLEQTIEDLRTKIAELEKQYPALDLEGPR. 3 disordered regions span residues 714-765, 786-836, and 880-944; these read RTLE…SGPQ, DAQQ…GNNC, and PALQ…MGIS. The FH1 domain occupies 735–1124; that stretch reads PPPKAPPEGL…GCGFLFPPLP (390 aa). The span at 786 to 795 shows a compositional bias: polar residues; sequence DAQQIQSASQ. Residues 803 to 817 show a composition bias toward low complexity; the sequence is LGSDSQGQPSQPSLH. The span at 818–827 shows a compositional bias: basic and acidic residues; sequence TESETSHEHS. Positions 893-944 are enriched in pro residues; the sequence is LPAPPQPPPLPGLGVPPPPPAPPLPGMGIPPPPPLPGMGIPPPPPLPGMGIS. A run of 12 repeats spans residues 919 to 929, 930 to 940, 941 to 951, 952 to 962, 963 to 973, 974 to 984, 985 to 995, 996 to 1006, 1007 to 1017, 1018 to 1028, 1029 to 1039, and 1040 to 1050. The interval 919 to 1039 is 12 X 11 AA tandem repeats of [MV]-G-I-P-P-P-P-P-L-P-G; the sequence is MGIPPPPPLP…GIPPPPPLPG (121 aa). A compositionally biased stretch (pro residues) spans 1037–1097; that stretch reads LPGVGIPPPP…PPPPLLPGSG (61 aa). The disordered stretch occupies residues 1037-1108; it reads LPGVGIPPPP…PHSSQVGSST (72 aa). Residues 1139–1554 enclose the FH2 domain; it reads RKQLIEPCRP…KEAEEVCRQK (416 aa). Residues 1419 to 1455 adopt a coiled-coil conformation; the sequence is QELFQASQMKFEDFQKDLRKLKKDLKACEAEAGKVYQ. The segment at 1571–1578 is important for interaction with SPIRE1; it reads KAKISMKT.

It belongs to the formin homology family. Cappuccino subfamily. As to quaternary structure, interacts with SPIRE1. Binds actin. Interacts with CDKN1A. Detected in brain and in oocytes (at protein level). Expressed almost exclusively in the developing and mature central nervous system. Detected in oocytes.

It localises to the cytoplasm. It is found in the cytoskeleton. The protein localises to the cytosol. Its subcellular location is the perinuclear region. The protein resides in the nucleus. It localises to the nucleolus. It is found in the cell membrane. The protein localises to the cell cortex. Its subcellular location is the cytoplasmic vesicle membrane. Actin-binding protein that is involved in actin cytoskeleton assembly and reorganization. Acts as an actin nucleation factor and promotes assembly of actin filaments together with SPIRE1 and SPIRE2. Involved in intracellular vesicle transport along actin fibers, providing a novel link between actin cytoskeleton dynamics and intracellular transport. Required for asymmetric spindle positioning, asymmetric oocyte division and polar body extrusion during female germ cell meiosis. Plays a role in responses to DNA damage, cellular stress and hypoxia by protecting CDKN1A against degradation, and thereby plays a role in stress-induced cell cycle arrest. Also acts in the nucleus: together with SPIRE1 and SPIRE2, promotes assembly of nuclear actin filaments in response to DNA damage in order to facilitate movement of chromatin and repair factors after DNA damage. Protects cells against apoptosis by protecting CDKN1A against degradation. This Mus musculus (Mouse) protein is Formin-2 (Fmn2).